The sequence spans 380 residues: Cytochrome b (380 aa).

Transmembrane regions (helical) follow at residues 34 to 54 (FGSLLGICLMTQILTGLLLAM), 78 to 99 (WLIRNLHANGASFFFICIYLHI), 114 to 134 (WNTGIILLLTLMATAFVGYVL), and 179 to 199 (FFALHFLLPFAIAGLTLIHLT). Residues histidine 84 and histidine 98 each coordinate heme b. Heme b is bound by residues histidine 183 and histidine 197. Histidine 202 is a binding site for a ubiquinone. Helical transmembrane passes span 227–247 (LKDILGFTLMFLPLTSLALFS), 289–309 (LGGVLALAASVLILFLSPFLH), 321–341 (LSQLLFWILVTNLFILTWVGS), and 348–368 (FIIIGQLASITYFTILLILFP).

It belongs to the cytochrome b family. As to quaternary structure, the cytochrome bc1 complex contains 11 subunits: 3 respiratory subunits (MT-CYB, CYC1 and UQCRFS1), 2 core proteins (UQCRC1 and UQCRC2) and 6 low-molecular weight proteins (UQCRH/QCR6, UQCRB/QCR7, UQCRQ/QCR8, UQCR10/QCR9, UQCR11/QCR10 and a cleavage product of UQCRFS1). This cytochrome bc1 complex then forms a dimer. It depends on heme b as a cofactor.

It is found in the mitochondrion inner membrane. Component of the ubiquinol-cytochrome c reductase complex (complex III or cytochrome b-c1 complex) that is part of the mitochondrial respiratory chain. The b-c1 complex mediates electron transfer from ubiquinol to cytochrome c. Contributes to the generation of a proton gradient across the mitochondrial membrane that is then used for ATP synthesis. The protein is Cytochrome b (MT-CYB) of Daption capense (Cape petrel).